The chain runs to 468 residues: Interleukin-9 receptor (468 aa).

The signal sequence occupies residues Met-1 to Gly-37. Over Val-38 to Ser-270 the chain is Extracellular. 2 N-linked (GlcNAc...) asparagine glycosylation sites follow: Asn-116 and Asn-155. The region spanning Pro-148–Pro-256 is the Fibronectin type-III domain. Positions Trp-244 to Ser-248 match the WSXWS motif motif. A helical membrane pass occupies residues Ala-271–Phe-291. The Cytoplasmic segment spans residues Lys-292 to Ala-468. The Box 1 motif signature appears at Phe-301–Glu-309. Positions Pro-407–Ser-426 are disordered.

It belongs to the type I cytokine receptor family. Type 4 subfamily. As to quaternary structure, interacts with IL9.

It is found in the cell membrane. The protein localises to the secreted. In terms of biological role, plays an important role in the immune response against parasites by acting as a receptor of IL9. The chain is Interleukin-9 receptor (Il9r) from Mus musculus (Mouse).